Consider the following 295-residue polypeptide: Glycine--tRNA ligase alpha subunit (295 aa).

The protein belongs to the class-II aminoacyl-tRNA synthetase family. As to quaternary structure, tetramer of two alpha and two beta subunits.

Its subcellular location is the cytoplasm. It carries out the reaction tRNA(Gly) + glycine + ATP = glycyl-tRNA(Gly) + AMP + diphosphate. This chain is Glycine--tRNA ligase alpha subunit, found in Thermosynechococcus vestitus (strain NIES-2133 / IAM M-273 / BP-1).